The following is a 390-amino-acid chain: MQEARRIRELPPYLFARIEKKIAEARERGVDIISLGIGDPDMPTPSHVIDKLVAEAHNPENHRYPTSEGLLAFRQAVADWYQRLYGVDLDPRREVVTLIGSKEGIAHISLCYVDPGDINLVPDPGYPVYNIGTLLAGGESYFMPLTAANGFLPDLGAIPSDVARRAKLMFINYPNNPTGAVADLKFFQEVVEFARSYDLIVCHDAAYSEITYDGYRAPSFLQAPGAKEVGIEFNSVSKPYNMTGWRLGWACGRADVIEALARIKSNIDSGAFQAVQYAGIAALTGPQEGLAEVRRVYQERRDIIVEGFNSLGWHLEKPKATFYVWAPVPRGYTSASFAEMVLEKAGVIITPGNGYGNYGEGYFRIALTISKERMQEAIERLRRVLGKVEF.

Substrate-binding residues include Tyr13, Gly38, Lys102, Tyr126, and Asn176. Pyridoxal 5'-phosphate is bound by residues 101 to 102, Tyr126, Asn176, Tyr207, and 235 to 237; these read SK and SVS. At Lys238 the chain carries N6-(pyridoxal phosphate)lysine. Pyridoxal 5'-phosphate is bound at residue Arg246. Arg364 is a substrate binding site.

Belongs to the class-I pyridoxal-phosphate-dependent aminotransferase family. LL-diaminopimelate aminotransferase subfamily. In terms of assembly, homodimer. Pyridoxal 5'-phosphate serves as cofactor.

It carries out the reaction (2S,6S)-2,6-diaminopimelate + 2-oxoglutarate = (S)-2,3,4,5-tetrahydrodipicolinate + L-glutamate + H2O + H(+). It functions in the pathway amino-acid biosynthesis; L-lysine biosynthesis via DAP pathway; LL-2,6-diaminopimelate from (S)-tetrahydrodipicolinate (aminotransferase route): step 1/1. Involved in the synthesis of meso-diaminopimelate (m-DAP or DL-DAP), required for both lysine and peptidoglycan biosynthesis. Catalyzes the direct conversion of tetrahydrodipicolinate to LL-diaminopimelate. Is also able to catalyze the reverse reaction in vitro, i.e. the transamination of LL-diaminopimelate with 2-oxoglutarate to produce tetrahydrodipicolinate and glutamate. Can also use m-DAP instead of LL-DAP as the amino-group donor, and oxaloacetate instead of 2-oxoglutarate as the amino-group acceptor. In Moorella thermoacetica (strain ATCC 39073 / JCM 9320), this protein is LL-diaminopimelate aminotransferase.